The chain runs to 145 residues: Ponticulin-like protein B (145 aa).

The first 22 residues, 1–22, serve as a signal peptide directing secretion; that stretch reads MLFIKSLLLLLSLIFAVSNATG. Residue Asn-34 is glycosylated (N-linked (GlcNAc...) asparagine). A disordered region spans residues 107-126; that stretch reads DTTSSSTSPSSTSPSSTSPA. A compositionally biased stretch (low complexity) spans 108-126; sequence TTSSSTSPSSTSPSSTSPA. Ser-117 carries the GPI-like-anchor amidated serine lipid modification. Positions 118 to 145 are cleaved as a propeptide — removed in mature form; it reads TSPSSTSPASTLIGSIAFVTLAALFALI.

The protein belongs to the ponticulin family. The GPI-like-anchor contains a phosphoceramide group, rather than a phosphatidyl group.

The protein localises to the cell membrane. In terms of biological role, binds F-actin and nucleates actin assembly. The sequence is that of Ponticulin-like protein B (ponB) from Dictyostelium discoideum (Social amoeba).